Reading from the N-terminus, the 665-residue chain is Protein-arginine deiminase type-2 (665 aa).

Aspartate 123, aspartate 125, aspartate 127, valine 129, glutamate 131, asparagine 154, aspartate 156, glutamate 158, aspartate 166, aspartate 169, lysine 171, aspartate 177, aspartate 180, glutamate 354, aspartate 389, phenylalanine 408, leucine 411, and glutamate 412 together coordinate Ca(2+). Cysteine 647 functions as the Nucleophile in the catalytic mechanism.

The protein belongs to the protein arginine deiminase family. Homodimer. Requires Ca(2+) as cofactor. In terms of tissue distribution, detected in keratinocytes in epidermis (at protein level).

The protein resides in the cytoplasm. The enzyme catalyses L-arginyl-[protein] + H2O = L-citrullyl-[protein] + NH4(+). Catalyzes the deimination of arginine residues of proteins. The sequence is that of Protein-arginine deiminase type-2 (PADI2) from Homo sapiens (Human).